The following is a 96-amino-acid chain: Large ribosomal subunit protein uL23 (96 aa).

Belongs to the universal ribosomal protein uL23 family. Part of the 50S ribosomal subunit. Contacts protein L29, and trigger factor when it is bound to the ribosome.

One of the early assembly proteins it binds 23S rRNA. One of the proteins that surrounds the polypeptide exit tunnel on the outside of the ribosome. Forms the main docking site for trigger factor binding to the ribosome. The chain is Large ribosomal subunit protein uL23 from Alkaliphilus metalliredigens (strain QYMF).